A 154-amino-acid polypeptide reads, in one-letter code: Transcriptional repressor NrdR (154 aa).

A zinc finger lies at 3–34; that stretch reads CPFCRHPDSRVVDSREADEGQAIRRRRSCPEC. Positions 46-136 constitute an ATP-cone domain; sequence LAVVKRSGVT…VYRGFSSAED (91 aa).

This sequence belongs to the NrdR family. Zn(2+) is required as a cofactor.

In terms of biological role, negatively regulates transcription of bacterial ribonucleotide reductase nrd genes and operons by binding to NrdR-boxes. The sequence is that of Transcriptional repressor NrdR from Mycobacteroides abscessus (strain ATCC 19977 / DSM 44196 / CCUG 20993 / CIP 104536 / JCM 13569 / NCTC 13031 / TMC 1543 / L948) (Mycobacterium abscessus).